The sequence spans 452 residues: Methionine aminopeptidase 2-1 (452 aa).

The segment at 1–100 (MAAKVADDVA…VRIDEVFPND (100 aa)) is disordered. Acidic residues predominate over residues 37–51 (EHDDSDDDNEAEDGA). Over residues 60–73 (KKKKKRKPRKKKKA) the composition is skewed to basic residues. H205 contacts substrate. Residues D225, D236, and H305 each coordinate a divalent metal cation. H313 lines the substrate pocket. E338 and E433 together coordinate a divalent metal cation.

The protein belongs to the peptidase M24A family. Methionine aminopeptidase eukaryotic type 2 subfamily. Co(2+) is required as a cofactor. Zn(2+) serves as cofactor. The cofactor is Mn(2+). Requires Fe(2+) as cofactor.

Its subcellular location is the cytoplasm. The catalysed reaction is Release of N-terminal amino acids, preferentially methionine, from peptides and arylamides.. Its function is as follows. Cotranslationally removes the N-terminal methionine from nascent proteins. The N-terminal methionine is often cleaved when the second residue in the primary sequence is small and uncharged (Met-Ala-, Cys, Gly, Pro, Ser, Thr, or Val). The chain is Methionine aminopeptidase 2-1 from Pyrenophora teres f. teres (strain 0-1) (Barley net blotch fungus).